Here is a 340-residue protein sequence, read N- to C-terminus: N-acetyl-gamma-glutamyl-phosphate reductase (340 aa).

The active site involves cysteine 146.

Belongs to the NAGSA dehydrogenase family. Type 1 subfamily.

The protein localises to the cytoplasm. It carries out the reaction N-acetyl-L-glutamate 5-semialdehyde + phosphate + NADP(+) = N-acetyl-L-glutamyl 5-phosphate + NADPH + H(+). The protein operates within amino-acid biosynthesis; L-arginine biosynthesis; N(2)-acetyl-L-ornithine from L-glutamate: step 3/4. Functionally, catalyzes the NADPH-dependent reduction of N-acetyl-5-glutamyl phosphate to yield N-acetyl-L-glutamate 5-semialdehyde. The protein is N-acetyl-gamma-glutamyl-phosphate reductase of Streptococcus thermophilus (strain ATCC BAA-491 / LMD-9).